Here is a 406-residue protein sequence, read N- to C-terminus: Cysteine desulfurase (406 aa).

K226 bears the N6-(pyridoxal phosphate)lysine mark. The Cysteine persulfide intermediate role is filled by C364.

It belongs to the class-V pyridoxal-phosphate-dependent aminotransferase family. Csd subfamily. In terms of assembly, homodimer. Interacts with SufE and the SufBCD complex composed of SufB, SufC and SufD. The interaction with SufE is required to mediate the direct transfer of the sulfur atom from the S-sulfanylcysteine. Pyridoxal 5'-phosphate is required as a cofactor.

Its subcellular location is the cytoplasm. The enzyme catalyses (sulfur carrier)-H + L-cysteine = (sulfur carrier)-SH + L-alanine. It catalyses the reaction L-selenocysteine + AH2 = hydrogenselenide + L-alanine + A + H(+). It functions in the pathway cofactor biosynthesis; iron-sulfur cluster biosynthesis. Cysteine desulfurases mobilize the sulfur from L-cysteine to yield L-alanine, an essential step in sulfur metabolism for biosynthesis of a variety of sulfur-containing biomolecules. Component of the suf operon, which is activated and required under specific conditions such as oxidative stress and iron limitation. Acts as a potent selenocysteine lyase in vitro, that mobilizes selenium from L-selenocysteine. Selenocysteine lyase activity is however unsure in vivo. In Salmonella dublin (strain CT_02021853), this protein is Cysteine desulfurase.